The following is a 231-amino-acid chain: Cytidylate kinase (231 aa).

18–26 (GPSGTGKSS) is an ATP binding site.

This sequence belongs to the cytidylate kinase family. Type 1 subfamily.

The protein resides in the cytoplasm. It carries out the reaction CMP + ATP = CDP + ADP. The enzyme catalyses dCMP + ATP = dCDP + ADP. The chain is Cytidylate kinase from Streptomyces griseus subsp. griseus (strain JCM 4626 / CBS 651.72 / NBRC 13350 / KCC S-0626 / ISP 5235).